The chain runs to 310 residues: Ribosomal RNA small subunit methyltransferase H (310 aa).

S-adenosyl-L-methionine contacts are provided by residues 33–35 (GGH), aspartate 52, phenylalanine 79, aspartate 98, and glutamine 105.

It belongs to the methyltransferase superfamily. RsmH family.

The protein localises to the cytoplasm. It carries out the reaction cytidine(1402) in 16S rRNA + S-adenosyl-L-methionine = N(4)-methylcytidine(1402) in 16S rRNA + S-adenosyl-L-homocysteine + H(+). Its function is as follows. Specifically methylates the N4 position of cytidine in position 1402 (C1402) of 16S rRNA. The polypeptide is Ribosomal RNA small subunit methyltransferase H (Campylobacter jejuni subsp. jejuni serotype O:23/36 (strain 81-176)).